A 267-amino-acid chain; its full sequence is Outer membrane protein assembly factor BamD (267 aa).

The signal sequence occupies residues 1–16; the sequence is MKKILLTVSLGLALSA. Cys-17 carries N-palmitoyl cysteine lipidation. Cys-17 carries the S-diacylglycerol cysteine lipid modification.

The protein belongs to the BamD family. As to quaternary structure, part of the Bam complex.

The protein resides in the cell outer membrane. Part of the outer membrane protein assembly complex, which is involved in assembly and insertion of beta-barrel proteins into the outer membrane. Required for efficient transformation of Neisseria meningitidis by species-related DNA. The sequence is that of Outer membrane protein assembly factor BamD from Neisseria meningitidis serogroup B (strain ATCC BAA-335 / MC58).